A 255-amino-acid chain; its full sequence is Triosephosphate isomerase (255 aa).

Substrate is bound at residue 9–11; that stretch reads NWK. Catalysis depends on His95, which acts as the Electrophile. Glu167 serves as the catalytic Proton acceptor. Residues Gly173, Ser212, and 233 to 234 each bind substrate; that span reads GG.

The protein belongs to the triosephosphate isomerase family. In terms of assembly, homodimer.

The protein resides in the cytoplasm. It carries out the reaction D-glyceraldehyde 3-phosphate = dihydroxyacetone phosphate. It participates in carbohydrate biosynthesis; gluconeogenesis. The protein operates within carbohydrate degradation; glycolysis; D-glyceraldehyde 3-phosphate from glycerone phosphate: step 1/1. In terms of biological role, involved in the gluconeogenesis. Catalyzes stereospecifically the conversion of dihydroxyacetone phosphate (DHAP) to D-glyceraldehyde-3-phosphate (G3P). This chain is Triosephosphate isomerase, found in Salmonella dublin (strain CT_02021853).